A 446-amino-acid polypeptide reads, in one-letter code: Exodeoxyribonuclease 7 large subunit (446 aa).

This sequence belongs to the XseA family. In terms of assembly, heterooligomer composed of large and small subunits.

The protein localises to the cytoplasm. It carries out the reaction Exonucleolytic cleavage in either 5'- to 3'- or 3'- to 5'-direction to yield nucleoside 5'-phosphates.. Bidirectionally degrades single-stranded DNA into large acid-insoluble oligonucleotides, which are then degraded further into small acid-soluble oligonucleotides. The chain is Exodeoxyribonuclease 7 large subunit from Streptococcus gordonii (strain Challis / ATCC 35105 / BCRC 15272 / CH1 / DL1 / V288).